A 144-amino-acid polypeptide reads, in one-letter code: Antigenic protein SchS21 (144 aa).

The N-linked (GlcNAc...) asparagine glycan is linked to N36. Residues 91-105 (VKQMWPAESRKPMSG) are igE-binding epitope.

Homodimer. Requires Mg(2+) as cofactor.

It is found in the secreted. Has exodeoxyribonuclease activity with lambda-DNA and salmon testes dsDNA. No activity with circular plasmid DNA. The physiological role of this enzyme may be to degrade environmental DNA, and thus mobilize nitrogen for uptake. This chain is Antigenic protein SchS21, found in Stachybotrys chartarum (Toxic black mold).